A 381-amino-acid polypeptide reads, in one-letter code: 1-deoxy-D-xylulose 5-phosphate reductoisomerase (381 aa).

The NADPH site is built by glycine 13, serine 14, isoleucine 15, asparagine 40, and asparagine 114. Lysine 115 contributes to the 1-deoxy-D-xylulose 5-phosphate binding site. Glutamate 116 lines the NADPH pocket. Aspartate 140 is a binding site for Mn(2+). 1-deoxy-D-xylulose 5-phosphate contacts are provided by serine 141, glutamate 142, serine 166, and histidine 189. Glutamate 142 serves as a coordination point for Mn(2+). An NADPH-binding site is contributed by glycine 195. 1-deoxy-D-xylulose 5-phosphate-binding residues include serine 202, asparagine 207, lysine 208, and glutamate 211. Glutamate 211 provides a ligand contact to Mn(2+).

Belongs to the DXR family. It depends on Mg(2+) as a cofactor. Mn(2+) is required as a cofactor.

It carries out the reaction 2-C-methyl-D-erythritol 4-phosphate + NADP(+) = 1-deoxy-D-xylulose 5-phosphate + NADPH + H(+). It participates in isoprenoid biosynthesis; isopentenyl diphosphate biosynthesis via DXP pathway; isopentenyl diphosphate from 1-deoxy-D-xylulose 5-phosphate: step 1/6. In terms of biological role, catalyzes the NADPH-dependent rearrangement and reduction of 1-deoxy-D-xylulose-5-phosphate (DXP) to 2-C-methyl-D-erythritol 4-phosphate (MEP). This is 1-deoxy-D-xylulose 5-phosphate reductoisomerase from Treponema denticola (strain ATCC 35405 / DSM 14222 / CIP 103919 / JCM 8153 / KCTC 15104).